The chain runs to 311 residues: Malate dehydrogenase (311 aa).

Residues 7–13 and Asp34 contribute to the NAD(+) site; that span reads GAAGGIG. Positions 81 and 87 each coordinate substrate. NAD(+)-binding positions include Asn94 and 117–119; that span reads ITN. Residues Asn119 and Arg153 each contribute to the substrate site. His177 functions as the Proton acceptor in the catalytic mechanism. Met227 is an NAD(+) binding site.

This sequence belongs to the LDH/MDH superfamily. MDH type 1 family. As to quaternary structure, homodimer.

The enzyme catalyses (S)-malate + NAD(+) = oxaloacetate + NADH + H(+). Its function is as follows. Catalyzes the reversible oxidation of malate to oxaloacetate. This is Malate dehydrogenase from Shewanella frigidimarina (strain NCIMB 400).